Reading from the N-terminus, the 249-residue chain is Undecaprenyl-diphosphatase (249 aa).

8 consecutive transmembrane segments (helical) span residues 11 to 31, 35 to 55, 80 to 100, 101 to 121, 135 to 155, 180 to 200, 202 to 222, and 226 to 246; these read GLTE…TAIF, PDVG…LIFV, LVLS…FIES, VFSS…LMLL, IPYF…LPGI, FLMS…NVAF, TEQI…LYLV, and VIGG…FFVL.

It belongs to the UppP family.

The protein localises to the cell membrane. The catalysed reaction is di-trans,octa-cis-undecaprenyl diphosphate + H2O = di-trans,octa-cis-undecaprenyl phosphate + phosphate + H(+). Its function is as follows. Catalyzes the dephosphorylation of undecaprenyl diphosphate (UPP). This is Undecaprenyl-diphosphatase from Methanococcus maripaludis (strain C7 / ATCC BAA-1331).